We begin with the raw amino-acid sequence, 636 residues long: Epithelial sodium channel subunit alpha (636 aa).

Positions 1-28 (MKSENQPEDKRIGKLKREANMQKMKEAA) are disordered. The Cytoplasmic segment spans residues 1 to 77 (MKSENQPEDK…VCSKKNRMKT (77 aa)). The helical transmembrane segment at 78 to 98 (AFWSILFFFTFGLMYWQFGII) threads the bilayer. The Extracellular portion of the chain corresponds to 99 to 549 (YREYFSFPVN…SQWSLWFGSS (451 aa)). 10 disulfide bridges follow: cysteine 126-cysteine 293, cysteine 218-cysteine 225, cysteine 270-cysteine 277, cysteine 381-cysteine 466, cysteine 403-cysteine 443, cysteine 403-cysteine 462, cysteine 407-cysteine 458, cysteine 416-cysteine 443, cysteine 416-cysteine 466, and cysteine 418-cysteine 432. Residues 550 to 570 (VLSVVELVELILDFIAITCIL) form a helical membrane-spanning segment. The Cytoplasmic portion of the chain corresponds to 571 to 636 (AIHWLNMNRS…LRRVSSQQTE (66 aa)).

The protein belongs to the amiloride-sensitive sodium channel (TC 1.A.6) family. SCNN1A subfamily. Heterotrimer; containing an alpha/SCNN1A, a beta/SCNN1B and a gamma/SCNN1G subunit.

The protein localises to the apical cell membrane. It is found in the cell projection. The protein resides in the cilium. Its subcellular location is the cytoplasmic granule. It localises to the cytoplasm. The protein localises to the cytoplasmic vesicle. It is found in the secretory vesicle. The protein resides in the acrosome. Its subcellular location is the flagellum. The enzyme catalyses Na(+)(in) = Na(+)(out). Originally identified and characterized by its inhibition by the diuretic drug amiloride. In terms of biological role, this is one of the three pore-forming subunits of the heterotrimeric epithelial sodium channel (ENaC), a critical regulator of sodium balance and fluid homeostasis. ENaC operates in epithelial tissues, where it mediates the electrodiffusion of sodium ions from extracellular fluid through the apical membrane of cells, with water following osmotically. This chain is Epithelial sodium channel subunit alpha, found in Anolis carolinensis (Green anole).